The sequence spans 629 residues: Solute carrier family 22 member 14 (629 aa).

The tract at residues 1-21 (MKEDQNYKTAFGSQNSRDTHR) is disordered. Residues 1–67 (MKEDQNYKTA…IGEFGTFQWR (67 aa)) lie on the Cytoplasmic side of the membrane. Residues 7 to 16 (YKTAFGSQNS) show a composition bias toward polar residues. The chain crosses the membrane as a helical span at residues 68–88 (LVVLTFIPSILSTFFIFSHHF). Topologically, residues 89–183 (LLTAQRPYCN…LVCGNEPNKE (95 aa)) are extracellular. Residues asparagine 98, asparagine 116, asparagine 124, and asparagine 149 are each glycosylated (N-linked (GlcNAc...) asparagine). A helical membrane pass occupies residues 184–204 (NGLTVFLSGVLTGSLLFGFLS). Residues 205 to 209 (DKLGR) are Cytoplasmic-facing. Residues 210–230 (YPIILLSLLGFLIFGFGTAFV) form a helical membrane-spanning segment. Topologically, residues 231-240 (SSFYQYLFFR) are extracellular. Residues 241-261 (FFVAQASVGYAICSVSLVMEW) traverse the membrane as a helical segment. Residues 262 to 269 (LVGEHRAQ) lie on the Cytoplasmic side of the membrane. A helical membrane pass occupies residues 270-290 (AVILQHSFLTIGVILLTGLAY). Topologically, residues 291–295 (KVVHW) are extracellular. Residues 296–316 (RLLCLLGGMPMFPLICNIWVL) form a helical membrane-spanning segment. At 317-378 (RESPRWLMVR…DFCTNQHLFK (62 aa)) the chain is on the cytoplasmic side. Residues 379–399 (VVLAIGCVWFTVSYISFTLNL) traverse the membrane as a helical segment. At 400 to 409 (KMNDFGLDVY) the chain is on the extracellular side. A helical membrane pass occupies residues 410 to 430 (FVQMVRSIVAVPARLCCIILL). Topologically, residues 431–436 (EYFGRK) are cytoplasmic. Residues 437–457 (WALNLTLFLVTSMCLFLLFLP) traverse the membrane as a helical segment. The Extracellular segment spans residues 458 to 463 (QEPKST). The chain crosses the membrane as a helical span at residues 464 to 484 (IILTLMLAEFSMAGTLSIFFI). Residues 485–496 (YTAELLPTVLRS) lie on the Cytoplasmic side of the membrane. The helical transmembrane segment at 497-517 (TGLGMVSLAWVAGAISSVAIF) threads the bilayer. Topologically, residues 518–523 (KQTKTQ) are extracellular. The chain crosses the membrane as a helical span at residues 524–544 (LPIFFCCLCCVLALCFSSLVP). At 545 to 629 (ETGSQSLRDS…PVQSLKAQPP (85 aa)) the chain is on the cytoplasmic side.

It belongs to the major facilitator (TC 2.A.1) superfamily. Organic cation transporter (TC 2.A.1.19) family. As to expression, testis-specific (at protein level). Specifically expressed in male germ cells (at protein level).

It is found in the mitochondrion inner membrane. The protein localises to the cell projection. It localises to the cilium. Its subcellular location is the flagellum membrane. The catalysed reaction is riboflavin(in) = riboflavin(out). Its function is as follows. Riboflavin transporter localized at the inner mitochondrial membrane of the spermatozoa midpiece, which is required for male fertility. SLC22A14-mediated riboflavin transport is essential for spermatozoa energy generation and motility: riboflavin is the precursor of FMN and FAD, which are coenzymes of many enzymes in the TCA cycle (the citric acid cycle) in mitochondria. Required for sperm motility and normal sperm flagellar structure. The sequence is that of Solute carrier family 22 member 14 from Mus musculus (Mouse).